The chain runs to 467 residues: UDP-N-acetylmuramate--L-alanine ligase (467 aa).

Residue 112-118 participates in ATP binding; sequence GTHGKTT.

This sequence belongs to the MurCDEF family.

It localises to the cytoplasm. It carries out the reaction UDP-N-acetyl-alpha-D-muramate + L-alanine + ATP = UDP-N-acetyl-alpha-D-muramoyl-L-alanine + ADP + phosphate + H(+). Its pathway is cell wall biogenesis; peptidoglycan biosynthesis. Cell wall formation. This chain is UDP-N-acetylmuramate--L-alanine ligase, found in Azoarcus sp. (strain BH72).